The sequence spans 142 residues: Hemoglobin subunit alpha (142 aa).

Serine 1 is modified (N-acetylserine). The Globin domain maps to 1-142 (SLSDKDKAAV…VALALAERYR (142 aa)). Histidine 59 contributes to the O2 binding site. Histidine 88 lines the heme b pocket.

It belongs to the globin family. Hb1 is a heterotetramer of two alpha chains and two beta chains. HbC is a heterotetramer of two alpha chains and two beta-C chains. Red blood cells.

Involved in oxygen transport from gills to the various peripheral tissues. In Trematomus bernacchii (Emerald rockcod), this protein is Hemoglobin subunit alpha (hba).